We begin with the raw amino-acid sequence, 573 residues long: Arginine--tRNA ligase (573 aa).

The short motif at 122-132 (PNLAKEMHVGH) is the 'HIGH' region element.

This sequence belongs to the class-I aminoacyl-tRNA synthetase family. In terms of assembly, monomer.

The protein localises to the cytoplasm. The enzyme catalyses tRNA(Arg) + L-arginine + ATP = L-arginyl-tRNA(Arg) + AMP + diphosphate. The protein is Arginine--tRNA ligase of Laribacter hongkongensis (strain HLHK9).